We begin with the raw amino-acid sequence, 349 residues long: Acyl-CoA Delta(11) desaturase (349 aa).

A run of 2 helical transmembrane segments spans residues 41–61 (FLTFSYAHLAALYGLYLCFTS) and 66–86 (TLLFSFVLFHMSNIGITAGAH). Positions 86-91 (HRLWTH) match the Histidine box-1 motif. The Histidine box-2 motif lies at 123 to 127 (HRLHH). The helical transmembrane segment at 184–204 (AVPLIGTVCFALPTLIPVYCW) threads the bilayer. Positions 263 to 267 (HNYHH) match the Histidine box-3 motif. Residues 282–302 (FLNLTTLFIDFCAWFGWAYDL) form a helical membrane-spanning segment.

This sequence belongs to the fatty acid desaturase type 1 family. Fe cation serves as cofactor. In terms of tissue distribution, adult female pheromone gland. Increases by two or three orders of magnitude during the first 2 days after adult eclosion.

It is found in the endoplasmic reticulum membrane. The enzyme catalyses an 11,12-saturated fatty acyl-CoA + 2 Fe(II)-[cytochrome b5] + O2 + 2 H(+) = an (11Z)-Delta(11)-fatty acyl-CoA + 2 Fe(III)-[cytochrome b5] + 2 H2O. Functionally, catalyzes the formation of Delta(11) fatty acyl precursors in the pheromone gland. This is Acyl-CoA Delta(11) desaturase (D11DS) from Trichoplusia ni (Cabbage looper).